Here is a 276-residue protein sequence, read N- to C-terminus: Rhomboid protease GlpG (276 aa).

Helical transmembrane passes span 94–114, 142–162, 169–189, 192–212, 229–249, and 250–270; these read GPVT…MSLI, IFMH…WYLG, LGSG…GYVQ, FSGP…GYVW, LIIF…GMSM, and ANGA…VDTL. The active-site Nucleophile is the Ser-201. Residue His-254 is part of the active site.

This sequence belongs to the peptidase S54 family.

The protein resides in the cell inner membrane. The catalysed reaction is Cleaves type-1 transmembrane domains using a catalytic dyad composed of serine and histidine that are contributed by different transmembrane domains.. Functionally, rhomboid-type serine protease that catalyzes intramembrane proteolysis. The chain is Rhomboid protease GlpG from Salmonella choleraesuis (strain SC-B67).